An 816-amino-acid polypeptide reads, in one-letter code: Phenylalanine--tRNA ligase beta subunit (816 aa).

Residues 40 to 148 (FEELAALKTG…EGMAHGQRFI (109 aa)) form the tRNA-binding domain. One can recognise a B5 domain in the interval 401-479 (KAVEVQRFSI…RIYGYDNVPT (79 aa)). Positions 457, 463, 466, and 467 each coordinate Mg(2+). The 94-residue stretch at 721–814 (PVYPAVKRDI…LTDRFGGSFR (94 aa)) folds into the FDX-ACB domain.

This sequence belongs to the phenylalanyl-tRNA synthetase beta subunit family. Type 1 subfamily. As to quaternary structure, tetramer of two alpha and two beta subunits. The cofactor is Mg(2+).

Its subcellular location is the cytoplasm. The enzyme catalyses tRNA(Phe) + L-phenylalanine + ATP = L-phenylalanyl-tRNA(Phe) + AMP + diphosphate + H(+). In Desulfotalea psychrophila (strain LSv54 / DSM 12343), this protein is Phenylalanine--tRNA ligase beta subunit.